The sequence spans 63 residues: Small ribosomal subunit protein bS21 (63 aa).

This sequence belongs to the bacterial ribosomal protein bS21 family.

The sequence is that of Small ribosomal subunit protein bS21 from Parabacteroides distasonis (strain ATCC 8503 / DSM 20701 / CIP 104284 / JCM 5825 / NCTC 11152).